Reading from the N-terminus, the 528-residue chain is Ceramide glucosyltransferase (528 aa).

Residues 1-6 (MYSFIE) are Lumenal-facing. The helical transmembrane segment at 7–27 (CIAGALFVLGCVVVTLVVIGV) threads the bilayer. Topologically, residues 28–369 (RALLYNFRNR…TVLSATILEP (342 aa)) are cytoplasmic. Residue aspartate 94 is a short sequence motif, D1. Residue aspartate 154 is a short sequence motif, D2. A short sequence motif (D3) is located at residue aspartate 308. Aspartate 308 serves as the catalytic Proton acceptor. A (Q/R)XXRW motif is present at residues 349–353 (RRSRW). Residues 370-390 (FTECFLFATYMSLAMTTIPVL) traverse the membrane as a helical segment. Residues 391–402 (SQNLGIPKTWNA) lie on the Lumenal side of the membrane. A helical membrane pass occupies residues 403 to 423 (TAIAWFTITTLWMLIDYIGYL). Residues 424 to 457 (RLHSGVTMEVDEHTPYFAKGFKNTGGIKRRPFLE) lie on the Cytoplasmic side of the membrane. Residues 458–478 (FLAAWIGREGLAFPVWAYAVV) traverse the membrane as a helical segment. Topologically, residues 479–528 (FGNTVNWRGRLFYIHWDTTVDAVEPREERTREVRTPELERGPSRNKHRVD) are lumenal. A disordered region spans residues 503–528 (PREERTREVRTPELERGPSRNKHRVD).

The protein belongs to the glycosyltransferase 2 family.

The protein localises to the golgi apparatus membrane. The catalysed reaction is an N-acylsphing-4-enine + UDP-alpha-D-glucose = a beta-D-glucosyl-(1&lt;-&gt;1')-N-acylsphing-4-enine + UDP + H(+). Its pathway is lipid metabolism; sphingolipid metabolism. In terms of biological role, catalyzes the final step in the biosynthesis of the membrane lipid glucosylceramide (GluCer), the transfer of glucose to ceramide. Glucosylceramides play important roles in growth, differentiation and pathogenicity. Contribution to fungal pathogenesis is host-dependent. The polypeptide is Ceramide glucosyltransferase (Gibberella zeae (strain ATCC MYA-4620 / CBS 123657 / FGSC 9075 / NRRL 31084 / PH-1) (Wheat head blight fungus)).